Here is a 299-residue protein sequence, read N- to C-terminus: Dye-decolorizing peroxidase YfeX (299 aa).

Residue Asp-143 is the Proton acceptor of the active site. Heme is bound at residue His-215.

It belongs to the DyP-type peroxidase family. It depends on heme b as a cofactor.

It is found in the cytoplasm. Functionally, has both general peroxidase activity and dye-decolorizing activity. Can catalyze the oxidation of both protoporphyrinogen IX and coproporphyrinogen III to their corresponding porphyrins. Also efficiently decolorizes the dyes alizarin red and Cibacron blue F3GA. This Escherichia coli (strain K12) protein is Dye-decolorizing peroxidase YfeX (yfeX).